Here is a 119-residue protein sequence, read N- to C-terminus: Immunoglobulin heavy variable 2-70D (119 aa).

An N-terminal signal peptide occupies residues 1–19 (MDILCSTLLLLTVPSWVLS). Glutamine 20 is subject to Pyrrolidone carboxylic acid. The tract at residues 20–44 (QVTLKESGPALVKPTQTLTLTCTFS) is framework-1. Residues 20–119 (QVTLKESGPA…DTATYYCARI (100 aa)) enclose the Ig-like domain. A disulfide bridge links cysteine 41 with cysteine 116. Positions 45-54 (GFSLSTSGMR) are complementarity-determining-1. A framework-2 region spans residues 55–71 (VSWIRQPPGKALEWLAR). Residues 72-78 (IDWDDDK) form a complementarity-determining-2 region. Residues 79–116 (FYSTSLKTRLTISKDTSKNQVVLTMTNMDPVDTATYYC) form a framework-3 region. Residues 117–119 (ARI) are complementarity-determining-3.

Immunoglobulins are composed of two identical heavy chains and two identical light chains; disulfide-linked.

It is found in the secreted. The protein localises to the cell membrane. In terms of biological role, v region of the variable domain of immunoglobulin heavy chains that participates in the antigen recognition. Immunoglobulins, also known as antibodies, are membrane-bound or secreted glycoproteins produced by B lymphocytes. In the recognition phase of humoral immunity, the membrane-bound immunoglobulins serve as receptors which, upon binding of a specific antigen, trigger the clonal expansion and differentiation of B lymphocytes into immunoglobulins-secreting plasma cells. Secreted immunoglobulins mediate the effector phase of humoral immunity, which results in the elimination of bound antigens. The antigen binding site is formed by the variable domain of one heavy chain, together with that of its associated light chain. Thus, each immunoglobulin has two antigen binding sites with remarkable affinity for a particular antigen. The variable domains are assembled by a process called V-(D)-J rearrangement and can then be subjected to somatic hypermutations which, after exposure to antigen and selection, allow affinity maturation for a particular antigen. This is Immunoglobulin heavy variable 2-70D from Homo sapiens (Human).